Here is a 130-residue protein sequence, read N- to C-terminus: 3-aminoacrylate deaminase RutC (130 aa).

The protein belongs to the RutC family.

It carries out the reaction (Z)-3-aminoacrylate + H2O + H(+) = 3-oxopropanoate + NH4(+). Functionally, involved in pyrimidine catabolism. Catalyzes the deamination of 3-aminoacrylate to malonic semialdehyde, a reaction that can also occur spontaneously. RutC may facilitate the reaction and modulate the metabolic fitness, rather than catalyzing essential functions. This Klebsiella pneumoniae (strain 342) protein is 3-aminoacrylate deaminase RutC.